Consider the following 171-residue polypeptide: Large ribosomal subunit protein uL10 (171 aa).

It belongs to the universal ribosomal protein uL10 family. As to quaternary structure, part of the ribosomal stalk of the 50S ribosomal subunit. The N-terminus interacts with L11 and the large rRNA to form the base of the stalk. The C-terminus forms an elongated spine to which L12 dimers bind in a sequential fashion forming a multimeric L10(L12)X complex.

Its function is as follows. Forms part of the ribosomal stalk, playing a central role in the interaction of the ribosome with GTP-bound translation factors. The protein is Large ribosomal subunit protein uL10 of Corynebacterium glutamicum (strain R).